A 153-amino-acid chain; its full sequence is Nucleoside diphosphate kinase (153 aa).

Positions 9, 57, 85, 91, 102, and 112 each coordinate ATP. H115 functions as the Pros-phosphohistidine intermediate in the catalytic mechanism.

It belongs to the NDK family. As to quaternary structure, homotetramer. Requires Mg(2+) as cofactor.

Its subcellular location is the cytoplasm. The enzyme catalyses a 2'-deoxyribonucleoside 5'-diphosphate + ATP = a 2'-deoxyribonucleoside 5'-triphosphate + ADP. It carries out the reaction a ribonucleoside 5'-diphosphate + ATP = a ribonucleoside 5'-triphosphate + ADP. Its function is as follows. Major role in the synthesis of nucleoside triphosphates other than ATP. The ATP gamma phosphate is transferred to the NDP beta phosphate via a ping-pong mechanism, using a phosphorylated active-site intermediate. This chain is Nucleoside diphosphate kinase, found in Parabacteroides distasonis (strain ATCC 8503 / DSM 20701 / CIP 104284 / JCM 5825 / NCTC 11152).